Consider the following 287-residue polypeptide: Probable ribosomal RNA small subunit methyltransferase A (287 aa).

S-adenosyl-L-methionine-binding residues include H29, L31, G56, E77, D102, and N117.

It belongs to the class I-like SAM-binding methyltransferase superfamily. rRNA adenine N(6)-methyltransferase family. RsmA subfamily.

It localises to the cytoplasm. In terms of biological role, specifically dimethylates two adjacent adenosines in the loop of a conserved hairpin near the 3'-end of 16S rRNA in the 30S particle. May play a critical role in biogenesis of 30S subunits. The sequence is that of Probable ribosomal RNA small subunit methyltransferase A from Methanosarcina barkeri (strain Fusaro / DSM 804).